The following is a 284-amino-acid chain: Bifunctional protein FolD (284 aa).

NADP(+) contacts are provided by residues 166–168 and Ser-191; that span reads GRS.

The protein belongs to the tetrahydrofolate dehydrogenase/cyclohydrolase family. Homodimer.

The enzyme catalyses (6R)-5,10-methylene-5,6,7,8-tetrahydrofolate + NADP(+) = (6R)-5,10-methenyltetrahydrofolate + NADPH. It catalyses the reaction (6R)-5,10-methenyltetrahydrofolate + H2O = (6R)-10-formyltetrahydrofolate + H(+). The protein operates within one-carbon metabolism; tetrahydrofolate interconversion. In terms of biological role, catalyzes the oxidation of 5,10-methylenetetrahydrofolate to 5,10-methenyltetrahydrofolate and then the hydrolysis of 5,10-methenyltetrahydrofolate to 10-formyltetrahydrofolate. The polypeptide is Bifunctional protein FolD (Leptospira interrogans serogroup Icterohaemorrhagiae serovar copenhageni (strain Fiocruz L1-130)).